Reading from the N-terminus, the 109-residue chain is Transcription initiation factor IIA subunit 2 (109 aa).

The protein belongs to the TFIIA subunit 2 family. As to quaternary structure, TFIIA is a heterodimer of the large unprocessed subunit 1 and a small subunit gamma. It was originally believed to be a heterotrimer of an alpha (p35), a beta (p19) and a gamma subunit (p12). Interacts with NCOA6 general coactivator. TFIIA forms a complex with TBP. Interacts with HSF1 (via transactivation domain). Part of TBP-based Pol II pre-initiation complex (PIC), in which Pol II core assembles with general transcription factors and other specific initiation factors including GTF2E1, GTF2E2, GTF2F1, GTF2F2, TCEA1, ERCC2, ERCC3, GTF2H2, GTF2H3, GTF2H4, GTF2H5, GTF2A1, GTF2A2, GTF2B and TBP; this large multi-subunit PIC complex mediates DNA unwinding and targets Pol II core to the transcription start site where the first phosphodiester bond forms. (Microbial infection) Interacts with SV40 Large T antigen.

Its subcellular location is the nucleus. Its function is as follows. TFIIA is a component of the transcription machinery of RNA polymerase II and plays an important role in transcriptional activation. TFIIA in a complex with TBP mediates transcriptional activity. The polypeptide is Transcription initiation factor IIA subunit 2 (GTF2A2) (Homo sapiens (Human)).